Consider the following 30-residue polypeptide: 136 kDa hydroxyproline-rich cell wall glycoprotein, major component (30 aa).

Residues P8, P9, P10, P11, P12, P17, P18, P19, P20, P26, P27, P28, and P29 each carry the 4-hydroxyproline modification.

O-glycosylated.

Its subcellular location is the secreted. It is found in the cell wall. In Phaseolus vulgaris (Kidney bean), this protein is 136 kDa hydroxyproline-rich cell wall glycoprotein, major component.